An 882-amino-acid polypeptide reads, in one-letter code: MTELSPKYNPAEVEAGRYQKWLDADVFKPSGDQKAKPYSIVIPPPNVTGKLHLGHAWDTTLQDIIIRQKRMQGFDTLWLPGMDHAGIATQAKVEERLREQGISRYDLGRDKFLDKVWEWKDEYATTIKEQWGKMGLSVDYSRERFTLDEGLSKAVRKVFVDLYKKGWIYRGEFIINWDPAARTALSDIEVIHKDVEGAFYHMNYMLEDGSRALQVATTRPETMFGDVAVAVNPEDPRYKDLIGKNVILPIVNKLIPIVGDEHADPEFGTGVVKITPAHDPNDFEVGQRHNLPQVNVMNDDGTMNELAGDFAGMDRFEARQATVAKLEELGALVNIEKRVHSVGHSERSGAVVEPRLSTQWFVKMDELAKQAMDNQETDDRVDFYPPRFNDTFLQWMENVHDWVISRQLWWGHQIPAWYNAEGEIYVGEEAPEGDDWTQDEDVLDTWFSSALWPFSTMGWPDTDVEDFKRYFPTSTLVTGYDIIFFWVSRMIFQSLEFTGRQPFQNVLIHGLIRDEEGRKMSKSLGNGIDPMDVIEKYGADSLRWFLSNGSAPGQDVRFSYEKMDASWNFINKIWNISRYILMNNEGLTLEDAESNVAKVAASEAGNVTDQWILHNLNETIAKVTENFDKFEFGVAGHILYNFIWEEFANWYVELTKEVLYSDNEAEKVITRSVLLYTLDKILRLLHPIMPFVTEEIYAQYAQGSIVTVDYPVVRPAFENEAAHKGVESLKDLIRAVRNARAEVNVAPSKPITILVKTADSELEDFFNSNINYIKCFTNPEKLEISSAIAAPELAMTSIITGAEIYLPLADLLNVEEELARLDKELAKWQKELDMVGKKLGNERFVANAKPEVVQKEKDKQADYQAKYDATQERIAEMKKIKS.

Residues 45–55 carry the 'HIGH' region motif; the sequence is PNVTGKLHLGH. Residues 519–523 carry the 'KMSKS' region motif; it reads KMSKS. Lys522 contacts ATP. A coiled-coil region spans residues 808–882; the sequence is LADLLNVEEE…RIAEMKKIKS (75 aa).

The protein belongs to the class-I aminoacyl-tRNA synthetase family. ValS type 1 subfamily. In terms of assembly, monomer.

The protein localises to the cytoplasm. The enzyme catalyses tRNA(Val) + L-valine + ATP = L-valyl-tRNA(Val) + AMP + diphosphate. Functionally, catalyzes the attachment of valine to tRNA(Val). As ValRS can inadvertently accommodate and process structurally similar amino acids such as threonine, to avoid such errors, it has a 'posttransfer' editing activity that hydrolyzes mischarged Thr-tRNA(Val) in a tRNA-dependent manner. This chain is Valine--tRNA ligase, found in Streptococcus pyogenes serotype M1.